The primary structure comprises 273 residues: 4-hydroxy-tetrahydrodipicolinate reductase (273 aa).

12-17 (GAAGRM) contributes to the NAD(+) binding site. Residue R39 coordinates NADP(+). NAD(+) is bound by residues 102-104 (GTT) and 126-129 (AANF). H159 functions as the Proton donor/acceptor in the catalytic mechanism. (S)-2,3,4,5-tetrahydrodipicolinate is bound at residue H160. The active-site Proton donor is the K163. 169 to 170 (GT) provides a ligand contact to (S)-2,3,4,5-tetrahydrodipicolinate.

Belongs to the DapB family. Homotetramer.

Its subcellular location is the cytoplasm. The enzyme catalyses (S)-2,3,4,5-tetrahydrodipicolinate + NAD(+) + H2O = (2S,4S)-4-hydroxy-2,3,4,5-tetrahydrodipicolinate + NADH + H(+). It catalyses the reaction (S)-2,3,4,5-tetrahydrodipicolinate + NADP(+) + H2O = (2S,4S)-4-hydroxy-2,3,4,5-tetrahydrodipicolinate + NADPH + H(+). It participates in amino-acid biosynthesis; L-lysine biosynthesis via DAP pathway; (S)-tetrahydrodipicolinate from L-aspartate: step 4/4. Its function is as follows. Catalyzes the conversion of 4-hydroxy-tetrahydrodipicolinate (HTPA) to tetrahydrodipicolinate. This chain is 4-hydroxy-tetrahydrodipicolinate reductase, found in Erwinia tasmaniensis (strain DSM 17950 / CFBP 7177 / CIP 109463 / NCPPB 4357 / Et1/99).